A 436-amino-acid chain; its full sequence is ATP-dependent protease ATPase subunit HslU (436 aa).

ATP is bound by residues isoleucine 18, glycine 60 to glutamate 65, aspartate 249, glutamate 314, and arginine 386.

It belongs to the ClpX chaperone family. HslU subfamily. As to quaternary structure, a double ring-shaped homohexamer of HslV is capped on each side by a ring-shaped HslU homohexamer. The assembly of the HslU/HslV complex is dependent on binding of ATP.

Its subcellular location is the cytoplasm. Functionally, ATPase subunit of a proteasome-like degradation complex; this subunit has chaperone activity. The binding of ATP and its subsequent hydrolysis by HslU are essential for unfolding of protein substrates subsequently hydrolyzed by HslV. HslU recognizes the N-terminal part of its protein substrates and unfolds these before they are guided to HslV for hydrolysis. The sequence is that of ATP-dependent protease ATPase subunit HslU from Ruegeria sp. (strain TM1040) (Silicibacter sp.).